The chain runs to 498 residues: Glycerol kinase (498 aa).

An ADP-binding site is contributed by threonine 12. ATP-binding residues include threonine 12, threonine 13, and serine 14. Threonine 12 provides a ligand contact to sn-glycerol 3-phosphate. Arginine 16 contributes to the ADP binding site. Sn-glycerol 3-phosphate is bound by residues arginine 82, glutamate 83, tyrosine 134, and aspartate 241. 5 residues coordinate glycerol: arginine 82, glutamate 83, tyrosine 134, aspartate 241, and glutamine 242. Threonine 263 and glycine 310 together coordinate ADP. Positions 263, 310, 314, and 411 each coordinate ATP. ADP contacts are provided by glycine 411 and asparagine 415.

This sequence belongs to the FGGY kinase family.

It carries out the reaction glycerol + ATP = sn-glycerol 3-phosphate + ADP + H(+). Its pathway is polyol metabolism; glycerol degradation via glycerol kinase pathway; sn-glycerol 3-phosphate from glycerol: step 1/1. Its activity is regulated as follows. Inhibited by fructose 1,6-bisphosphate (FBP). Its function is as follows. Key enzyme in the regulation of glycerol uptake and metabolism. Catalyzes the phosphorylation of glycerol to yield sn-glycerol 3-phosphate. The protein is Glycerol kinase of Janthinobacterium sp. (strain Marseille) (Minibacterium massiliensis).